The sequence spans 80 residues: Conotoxin Ca11.3 (80 aa).

The signal sequence occupies residues 1 to 19 (MKLVLAIVVILMLLSLSTG). Positions 20–42 (AEMSDNHASRSATALRDRLLSPK) are excised as a propeptide. Cystine bridges form between Cys46–Cys60, Cys53–Cys65, Cys59–Cys72, and Cys64–Cys79.

The protein belongs to the conotoxin I3 superfamily. Expressed by the venom duct.

The protein resides in the secreted. This Conus caracteristicus (Characteristic cone) protein is Conotoxin Ca11.3.